Reading from the N-terminus, the 261-residue chain is Non-structural protein 2a (261 aa).

The protein belongs to the coronaviruses ns2a protein family.

The protein localises to the host cytoplasm. Its function is as follows. Not essential for virus replication in transformed murine cells. This chain is Non-structural protein 2a, found in Mus musculus (Mouse).